The following is a 177-amino-acid chain: Putative acetyltransferase FG08082 (177 aa).

Residues 81 to 174 (EEWEQVGLVR…VSIAMVEGPG (94 aa)) form the N-acetyltransferase domain.

The protein belongs to the acetyltransferase family.

It functions in the pathway mycotoxin biosynthesis. Functionally, putative acetyltransferase; part of the gene cluster that mediates the biosynthesis of butenolide, a mycotoxin that shows antibiotic activity but does not seem to play a major role in the spread of head blight in wheat. Butenolide is derived from glutamic acid via a 4-acetamido-2-butenoic acid intermediate. The predicted function of the NADH:flavin oxidoreductase FG08077, the cytochrome P450 monooxygenase FG08079, the decarboxylase FG08083, and the putative acetyltransferase FG08082 are consistent with this pathway, however, the respective activities of the butelonide biosynthesis cluster enzymes have still to be experimentally determined. This Gibberella zeae (strain ATCC MYA-4620 / CBS 123657 / FGSC 9075 / NRRL 31084 / PH-1) (Wheat head blight fungus) protein is Putative acetyltransferase FG08082.